Consider the following 288-residue polypeptide: 33 kDa chaperonin (288 aa).

2 disulfides stabilise this stretch: Cys236/Cys238 and Cys269/Cys272.

This sequence belongs to the HSP33 family. In terms of processing, under oxidizing conditions two disulfide bonds are formed involving the reactive cysteines. Under reducing conditions zinc is bound to the reactive cysteines and the protein is inactive.

It localises to the cytoplasm. In terms of biological role, redox regulated molecular chaperone. Protects both thermally unfolding and oxidatively damaged proteins from irreversible aggregation. Plays an important role in the bacterial defense system toward oxidative stress. This is 33 kDa chaperonin from Syntrophotalea carbinolica (strain DSM 2380 / NBRC 103641 / GraBd1) (Pelobacter carbinolicus).